The sequence spans 735 residues: Photosystem I P700 chlorophyll a apoprotein A2 (735 aa).

8 helical membrane passes run 47–70 (IFASHFGQLSIIFLWTSGNLFHVA), 136–159 (LYNGSLFLSILSALFLLAGWLHLQ), 176–200 (LNHHLSGLFGISSLAWTGHLVHVAI), 274–292 (MAHHHLAIAVIFVLAGHMY), 331–354 (LHFQLGLALASVGTICSLVAQHMY), 370–396 (AALYTHHQYIASFIICGAFAHGAIFFI), 418–440 (AIISHLSWVSLFLGFHTLGLYVH), and 518–536 (FLVHHAIALGLHTTTLILV). [4Fe-4S] cluster contacts are provided by C560 and C569. Transmembrane regions (helical) follow at residues 576–597 (AFYLSIFWSLNTVGWVTFYWHW) and 644–666 (LSVWAWVFLFGHLIYATGFMFLI). Residues H655, M663, and Y671 each contribute to the chlorophyll a site. A phylloquinone-binding site is contributed by W672. The chain crosses the membrane as a helical span at residues 708-728 (LVGLVHFSVGYIFTYAAFLIA).

This sequence belongs to the PsaA/PsaB family. As to quaternary structure, the PsaA/B heterodimer binds the P700 chlorophyll special pair and subsequent electron acceptors. PSI consists of a core antenna complex that captures photons, and an electron transfer chain that converts photonic excitation into a charge separation. The eukaryotic PSI reaction center is composed of at least 11 subunits. It depends on P700 is a chlorophyll a/chlorophyll a' dimer, A0 is one or more chlorophyll a, A1 is one or both phylloquinones and FX is a shared 4Fe-4S iron-sulfur center. as a cofactor.

The protein resides in the plastid. It localises to the chloroplast thylakoid membrane. The catalysed reaction is reduced [plastocyanin] + hnu + oxidized [2Fe-2S]-[ferredoxin] = oxidized [plastocyanin] + reduced [2Fe-2S]-[ferredoxin]. Its function is as follows. PsaA and PsaB bind P700, the primary electron donor of photosystem I (PSI), as well as the electron acceptors A0, A1 and FX. PSI is a plastocyanin/cytochrome c6-ferredoxin oxidoreductase, converting photonic excitation into a charge separation, which transfers an electron from the donor P700 chlorophyll pair to the spectroscopically characterized acceptors A0, A1, FX, FA and FB in turn. Oxidized P700 is reduced on the lumenal side of the thylakoid membrane by plastocyanin or cytochrome c6. This Stigeoclonium helveticum (Green alga) protein is Photosystem I P700 chlorophyll a apoprotein A2.